Consider the following 132-residue polypeptide: MVKHQTQKKGVKRKQLKNIPSGVVHVKATFNNTIVSITDPAGNVISWASAGKVGYSGSRKSSAFAATVAAQDAAKNAMNSGLKEVEVCLKGTGAGRESAVRALIAAGLVVSVIRDETPVPHNGCRPRKRRRV.

It belongs to the universal ribosomal protein uS11 family. Part of the 30S ribosomal subunit. Interacts with proteins S7 and S18. Binds to IF-3.

Functionally, located on the platform of the 30S subunit, it bridges several disparate RNA helices of the 16S rRNA. Forms part of the Shine-Dalgarno cleft in the 70S ribosome. This chain is Small ribosomal subunit protein uS11, found in Chlamydia felis (strain Fe/C-56) (Chlamydophila felis).